We begin with the raw amino-acid sequence, 410 residues long: Tryptophan synthase beta chain (410 aa).

Position 98 is an N6-(pyridoxal phosphate)lysine (K98).

It belongs to the TrpB family. In terms of assembly, tetramer of two alpha and two beta chains. It depends on pyridoxal 5'-phosphate as a cofactor.

It catalyses the reaction (1S,2R)-1-C-(indol-3-yl)glycerol 3-phosphate + L-serine = D-glyceraldehyde 3-phosphate + L-tryptophan + H2O. It functions in the pathway amino-acid biosynthesis; L-tryptophan biosynthesis; L-tryptophan from chorismate: step 5/5. In terms of biological role, the beta subunit is responsible for the synthesis of L-tryptophan from indole and L-serine. This Dinoroseobacter shibae (strain DSM 16493 / NCIMB 14021 / DFL 12) protein is Tryptophan synthase beta chain.